Here is an 81-residue protein sequence, read N- to C-terminus: MRKDIHPKNNLVVFKDGSNGAMFLTKSTLNSKETIKYIDGKEYPLVTVEITSKSHPFYTGQQKFVDAAGRIDKFNKRYKKS.

It belongs to the bacterial ribosomal protein bL31 family. Type B subfamily. As to quaternary structure, part of the 50S ribosomal subunit.

The sequence is that of Large ribosomal subunit protein bL31B from Borreliella burgdorferi (strain ATCC 35210 / DSM 4680 / CIP 102532 / B31) (Borrelia burgdorferi).